Consider the following 178-residue polypeptide: Interleukin-17B (178 aa).

Residues 1–22 form the signal peptide; sequence MDWPHSLLFLLAISIFLGPSQP. The tract at residues 21 to 44 is disordered; that stretch reads QPRNTKGKRKGQVRPGPLAPGPHQ. An N-linked (GlcNAc...) asparagine glycan is attached at asparagine 75. Cystine bridges form between cysteine 121–cysteine 176 and cysteine 126–cysteine 178.

This sequence belongs to the IL-17 family.

It is found in the secreted. Its function is as follows. Stimulates the release of tumor necrosis factor alpha and IL-1-beta from the monocytic cell line THP-1. This Mesocricetus auratus (Golden hamster) protein is Interleukin-17B (IL17B).